The following is a 122-amino-acid chain: UPF0102 protein XCV0816 (122 aa).

Belongs to the UPF0102 family.

This is UPF0102 protein XCV0816 from Xanthomonas euvesicatoria pv. vesicatoria (strain 85-10) (Xanthomonas campestris pv. vesicatoria).